The following is a 476-amino-acid chain: Serine/threonine-protein kinase chk-2 (476 aa).

In terms of domain architecture, FHA spans Phe66–Ile127. The Protein kinase domain maps to His170–Met436. ATP-binding positions include Gly177 to Val184, Lys199, and Glu252 to Glu258. The active-site Proton acceptor is Asp301. ATP contacts are provided by residues Glu305 to Asn306 and Asp322.

The protein belongs to the protein kinase superfamily. CAMK Ser/Thr protein kinase family. CHK2 subfamily. The cofactor is Mg(2+). Highly expressed in germline tissue.

It localises to the nucleus. It catalyses the reaction L-seryl-[protein] + ATP = O-phospho-L-seryl-[protein] + ADP + H(+). The enzyme catalyses L-threonyl-[protein] + ATP = O-phospho-L-threonyl-[protein] + ADP + H(+). Functionally, serine/threonine-protein kinase which is required for checkpoint-mediated cell cycle arrest, activation of DNA repair and apoptosis in response to the presence of DNA double-strand breaks. May also negatively regulate cell cycle progression during unperturbed cell cycles. Phosphorylates and inhibits cdc25 phosphatase, preventing entry into mitosis. Required for nuclear reorganization and homologous chromosome pairing during meiotic prophase. The chain is Serine/threonine-protein kinase chk-2 (chk-2) from Caenorhabditis elegans.